The following is a 318-amino-acid chain: Chlorophyllase-2 (318 aa).

Residues 136–140 carry the GXSXG motif; the sequence is GHSRG. S138 (nucleophile) is an active-site residue. Residues D167 and H244 each act as charge relay system in the active site.

Belongs to the AB hydrolase superfamily. Lipase family. Expressed in leaves, flowers and flower buds, but not in roots.

It is found in the cytoplasm. The protein localises to the cytosol. The enzyme catalyses a chlorophyll + H2O = a chlorophyllide + phytol + H(+). It catalyses the reaction chlorophyll a + H2O = phytol + chlorophyllide a + H(+). Its pathway is porphyrin-containing compound metabolism; chlorophyll degradation. In terms of biological role, catalyzes the hydrolysis of ester bond in chlorophyll to yield chlorophyllide and phytol. Does not seem to be required for chlorophyll degradation during senescence. The sequence is that of Chlorophyllase-2 from Arabidopsis thaliana (Mouse-ear cress).